We begin with the raw amino-acid sequence, 209 residues long: Ribosomal RNA large subunit methyltransferase E (209 aa).

Residues G63, W65, D83, D99, and D124 each contribute to the S-adenosyl-L-methionine site. The active-site Proton acceptor is K164.

The protein belongs to the class I-like SAM-binding methyltransferase superfamily. RNA methyltransferase RlmE family.

The protein resides in the cytoplasm. The enzyme catalyses uridine(2552) in 23S rRNA + S-adenosyl-L-methionine = 2'-O-methyluridine(2552) in 23S rRNA + S-adenosyl-L-homocysteine + H(+). In terms of biological role, specifically methylates the uridine in position 2552 of 23S rRNA at the 2'-O position of the ribose in the fully assembled 50S ribosomal subunit. The polypeptide is Ribosomal RNA large subunit methyltransferase E (Shewanella frigidimarina (strain NCIMB 400)).